Reading from the N-terminus, the 485-residue chain is Rhamnulokinase (485 aa).

Position 11-15 (11-15) interacts with ATP; that stretch reads ASSGR. Residues alanine 79 and 234 to 236 contribute to the substrate site; that span reads HDT. The Proton acceptor role is filled by aspartate 235. An ATP-binding site is contributed by threonine 257. Asparagine 294 is a substrate binding site. ATP is bound by residues glutamine 302 and glycine 401.

Belongs to the rhamnulokinase family. It depends on Mg(2+) as a cofactor.

The enzyme catalyses L-rhamnulose + ATP = L-rhamnulose 1-phosphate + ADP + H(+). The protein operates within carbohydrate degradation; L-rhamnose degradation; glycerone phosphate from L-rhamnose: step 2/3. Its function is as follows. Involved in the catabolism of L-rhamnose (6-deoxy-L-mannose). Catalyzes the transfer of the gamma-phosphate group from ATP to the 1-hydroxyl group of L-rhamnulose to yield L-rhamnulose 1-phosphate. The protein is Rhamnulokinase of Ligilactobacillus salivarius (strain UCC118) (Lactobacillus salivarius).